We begin with the raw amino-acid sequence, 320 residues long: Ribosomal RNA small subunit methyltransferase H (320 aa).

Residues 42–44, Asp62, Phe86, Asp108, and Gln115 contribute to the S-adenosyl-L-methionine site; that span reads GGH.

Belongs to the methyltransferase superfamily. RsmH family.

The protein resides in the cytoplasm. It catalyses the reaction cytidine(1402) in 16S rRNA + S-adenosyl-L-methionine = N(4)-methylcytidine(1402) in 16S rRNA + S-adenosyl-L-homocysteine + H(+). Functionally, specifically methylates the N4 position of cytidine in position 1402 (C1402) of 16S rRNA. This is Ribosomal RNA small subunit methyltransferase H from Yersinia enterocolitica serotype O:8 / biotype 1B (strain NCTC 13174 / 8081).